Here is a 337-residue protein sequence, read N- to C-terminus: Primase homolog protein (337 aa).

The 100-residue stretch at 205–304 (SEIIIVEGEP…WLVKWPKKSE (100 aa)) folds into the Toprim domain. Residues E211, D273, and D275 each contribute to the Mg(2+) site.

Mg(2+) serves as cofactor.

Functionally, may act as a DNA primase. This Arabidopsis thaliana (Mouse-ear cress) protein is Primase homolog protein.